The chain runs to 489 residues: Glutamyl-tRNA(Gln) amidotransferase subunit A (489 aa).

Catalysis depends on charge relay system residues Lys77 and Ser157. Catalysis depends on Ser181, which acts as the Acyl-ester intermediate.

This sequence belongs to the amidase family. GatA subfamily. In terms of assembly, heterotrimer of A, B and C subunits.

The catalysed reaction is L-glutamyl-tRNA(Gln) + L-glutamine + ATP + H2O = L-glutaminyl-tRNA(Gln) + L-glutamate + ADP + phosphate + H(+). Functionally, allows the formation of correctly charged Gln-tRNA(Gln) through the transamidation of misacylated Glu-tRNA(Gln) in organisms which lack glutaminyl-tRNA synthetase. The reaction takes place in the presence of glutamine and ATP through an activated gamma-phospho-Glu-tRNA(Gln). In Caulobacter vibrioides (strain ATCC 19089 / CIP 103742 / CB 15) (Caulobacter crescentus), this protein is Glutamyl-tRNA(Gln) amidotransferase subunit A.